A 251-amino-acid polypeptide reads, in one-letter code: Ditrans,polycis-undecaprenyl-diphosphate synthase ((2E,6E)-farnesyl-diphosphate specific) (251 aa).

Residue aspartate 20 is part of the active site. Aspartate 20 lines the Mg(2+) pocket. Residues 21–24 (GNGR), tryptophan 25, arginine 33, histidine 37, and 65–67 (SSE) each bind substrate. Asparagine 68 acts as the Proton acceptor in catalysis. Substrate-binding positions include tryptophan 69, arginine 71, arginine 188, and 194 to 196 (RIS). Glutamate 207 contributes to the Mg(2+) binding site.

Belongs to the UPP synthase family. As to quaternary structure, homodimer. It depends on Mg(2+) as a cofactor.

The enzyme catalyses 8 isopentenyl diphosphate + (2E,6E)-farnesyl diphosphate = di-trans,octa-cis-undecaprenyl diphosphate + 8 diphosphate. In terms of biological role, catalyzes the sequential condensation of isopentenyl diphosphate (IPP) with (2E,6E)-farnesyl diphosphate (E,E-FPP) to yield (2Z,6Z,10Z,14Z,18Z,22Z,26Z,30Z,34E,38E)-undecaprenyl diphosphate (di-trans,octa-cis-UPP). UPP is the precursor of glycosyl carrier lipid in the biosynthesis of bacterial cell wall polysaccharide components such as peptidoglycan and lipopolysaccharide. In Vibrio parahaemolyticus serotype O3:K6 (strain RIMD 2210633), this protein is Ditrans,polycis-undecaprenyl-diphosphate synthase ((2E,6E)-farnesyl-diphosphate specific).